A 230-amino-acid chain; its full sequence is Poxin (230 aa).

Histidine 43 acts as the Proton donor in catalysis. Tyrosine 174 functions as the Shared with catalytic histidine of dimeric partner in the catalytic mechanism. The Proton acceptor; shared with catalytic histidine of dimeric partner role is filled by lysine 178.

The protein belongs to the poxin family. In terms of assembly, homodimer.

It catalyses the reaction 2',3'-cGAMP + H2O = Gp(2'-5')Ap(3') + H(+). Nuclease that cleaves host 2',3'-cGAMP. In Orgyia pseudotsugata multicapsid polyhedrosis virus (OpMNPV), this protein is Poxin (P26).